The following is a 28-amino-acid chain: Conotoxin Cal6.43b (28 aa).

3 disulfides stabilise this stretch: Cys3–Cys13, Cys7–Cys19, and Cys12–Cys25.

In terms of tissue distribution, expressed by the venom duct.

Its subcellular location is the secreted. In terms of biological role, probable neurotoxin with unknown target. Possibly targets ion channels. The sequence is that of Conotoxin Cal6.43b from Californiconus californicus (California cone).